The sequence spans 938 residues: Isoleucine--tRNA ligase (938 aa).

The short motif at 58-68 is the 'HIGH' region element; sequence PYANGSIHIGH. Residue Glu-561 coordinates L-isoleucyl-5'-AMP. The 'KMSKS' region motif lies at 602-606; the sequence is KMSKS. Residue Lys-605 participates in ATP binding. Residues Cys-901, Cys-904, Cys-921, and Cys-924 each contribute to the Zn(2+) site.

The protein belongs to the class-I aminoacyl-tRNA synthetase family. IleS type 1 subfamily. Monomer. It depends on Zn(2+) as a cofactor.

It localises to the cytoplasm. It carries out the reaction tRNA(Ile) + L-isoleucine + ATP = L-isoleucyl-tRNA(Ile) + AMP + diphosphate. Functionally, catalyzes the attachment of isoleucine to tRNA(Ile). As IleRS can inadvertently accommodate and process structurally similar amino acids such as valine, to avoid such errors it has two additional distinct tRNA(Ile)-dependent editing activities. One activity is designated as 'pretransfer' editing and involves the hydrolysis of activated Val-AMP. The other activity is designated 'posttransfer' editing and involves deacylation of mischarged Val-tRNA(Ile). The protein is Isoleucine--tRNA ligase of Sodalis glossinidius (strain morsitans).